Reading from the N-terminus, the 263-residue chain is Shikimate dehydrogenase (NADP(+)) (263 aa).

Residues S16–S18 and T65 contribute to the shikimate site. Residue K69 is the Proton acceptor of the active site. Residues N90 and D105 each coordinate shikimate. NADP(+)-binding positions include G125–S129, S181, and L208. Y210 contacts shikimate. NADP(+) is bound at residue G230. Q237 lines the shikimate pocket.

This sequence belongs to the shikimate dehydrogenase family. Homodimer.

It carries out the reaction shikimate + NADP(+) = 3-dehydroshikimate + NADPH + H(+). It functions in the pathway metabolic intermediate biosynthesis; chorismate biosynthesis; chorismate from D-erythrose 4-phosphate and phosphoenolpyruvate: step 4/7. Involved in the biosynthesis of the chorismate, which leads to the biosynthesis of aromatic amino acids. Catalyzes the reversible NADPH linked reduction of 3-dehydroshikimate (DHSA) to yield shikimate (SA). The protein is Shikimate dehydrogenase (NADP(+)) of Helicobacter pylori (strain ATCC 700392 / 26695) (Campylobacter pylori).